Reading from the N-terminus, the 947-residue chain is Nonribosomal peptide synthetase ucdA (947 aa).

The segment at 25 to 413 (YSPHANAGYC…AGPVVFKEYF (389 aa)) is adenylation (A) domain. The 81-residue stretch at 585-665 (APENEFERDL…DLGTALRKLQ (81 aa)) folds into the Carrier domain. Residue serine 623 is modified to O-(pantetheine 4'-phosphoryl)serine. Residues 684–934 (PLWLVHPGVG…MLSPEHVFDF (251 aa)) form a thioesterase (TE) domain region.

It belongs to the NRP synthetase family.

It carries out the reaction 2 3-(4-hydroxyphenyl)pyruvate + 2 ATP = atromentin + 2 AMP + 2 diphosphate + H(+). Its pathway is secondary metabolite biosynthesis. Its function is as follows. Nonribosomal peptide synthetase that mediates the biosynthesis of usterphenyllins and uscandidusins, p-terphenyl derivatives. Within the pathway, ucdA condenses two 4-hydroxyphenylpyruvate (HPPA) units to produce atromentin. UcdA first activates HPPA through its A domain to AMP-HPPA. The HPPA unit is then loaded to the T domain and eventually transferred to the TE domain. Another HPPA unit is then loaded onto the T domain. The TE domain then catalyzes the condensation of the two HPPA units and the release of atromentin via cyclization. The pathway begin with the biosynthesis of 4-hydroxyphenylpyruvate (HPPA) from L-tyrosine, possibly by the aminotransferase ucdG. The nonribosomal peptide synthetase ucdA then condenses two HPPA units to produce atromentin. The key step in this pathway is the reduction and dehydration of atromentin to form a terphenyl triol intermediate, performed by the NAD-dependent dehydrogenase ucdB. Further O-methylation by the methyltransferase ucdC forms terphenyllin carrying two methoxy moieties at C-9 and C-12, and subsequent dihydroxylation at C-3 of ring A and C-15 of ring C by the flavin-dependent oxygenase ucdD leads to 3,15-dihydroxyterphenyllin. Prenylation by ucdE at position C-5 of ring A forms usterphenyllin B, and is followed by a second prenylation at position C-14 of ring C to form usterphenyllin A. The following furan ring formation that leads to uscandidusins A and B was proven to be an unexpected spontaneous non-enzymatic reaction. In Aspergillus ustus, this protein is Nonribosomal peptide synthetase ucdA.